The primary structure comprises 119 residues: Large ribosomal subunit protein bL20 (119 aa).

Belongs to the bacterial ribosomal protein bL20 family.

Functionally, binds directly to 23S ribosomal RNA and is necessary for the in vitro assembly process of the 50S ribosomal subunit. It is not involved in the protein synthesizing functions of that subunit. The chain is Large ribosomal subunit protein bL20 from Clostridium kluyveri (strain NBRC 12016).